A 329-amino-acid polypeptide reads, in one-letter code: GTP 3',8-cyclase (329 aa).

Residues 8–234 (AFARKFYYLR…QLRQRSDGPA (227 aa)) form the Radical SAM core domain. Arg17 lines the GTP pocket. [4Fe-4S] cluster-binding residues include Cys24 and Cys28. Tyr30 contacts S-adenosyl-L-methionine. Residue Cys31 coordinates [4Fe-4S] cluster. Arg68 provides a ligand contact to GTP. Residue Gly72 coordinates S-adenosyl-L-methionine. Thr99 provides a ligand contact to GTP. Ser123 is a binding site for S-adenosyl-L-methionine. GTP is bound at residue Lys160. An S-adenosyl-L-methionine-binding site is contributed by Met194. [4Fe-4S] cluster contacts are provided by Cys257 and Cys260. 262–264 (RLR) contributes to the GTP binding site. Cys274 is a binding site for [4Fe-4S] cluster.

Belongs to the radical SAM superfamily. MoaA family. As to quaternary structure, monomer and homodimer. [4Fe-4S] cluster is required as a cofactor.

The enzyme catalyses GTP + AH2 + S-adenosyl-L-methionine = (8S)-3',8-cyclo-7,8-dihydroguanosine 5'-triphosphate + 5'-deoxyadenosine + L-methionine + A + H(+). The protein operates within cofactor biosynthesis; molybdopterin biosynthesis. In terms of biological role, catalyzes the cyclization of GTP to (8S)-3',8-cyclo-7,8-dihydroguanosine 5'-triphosphate. This chain is GTP 3',8-cyclase, found in Escherichia coli O7:K1 (strain IAI39 / ExPEC).